The primary structure comprises 577 residues: Urease subunit alpha (577 aa).

The Urease domain occupies 136-577 (GAIDCHVHLI…LPMAQRYFLF (442 aa)). Residues H141, H143, and K224 each contribute to the Ni(2+) site. Position 224 is an N6-carboxylysine (K224). H226 is a substrate binding site. Residues H253 and H279 each contribute to the Ni(2+) site. Residue H327 is the Proton donor of the active site. D367 provides a ligand contact to Ni(2+).

This sequence belongs to the metallo-dependent hydrolases superfamily. Urease alpha subunit family. As to quaternary structure, heterotrimer of UreA (gamma), UreB (beta) and UreC (alpha) subunits. Three heterotrimers associate to form the active enzyme. The cofactor is Ni cation. Carboxylation allows a single lysine to coordinate two nickel ions.

It is found in the cytoplasm. It catalyses the reaction urea + 2 H2O + H(+) = hydrogencarbonate + 2 NH4(+). It participates in nitrogen metabolism; urea degradation; CO(2) and NH(3) from urea (urease route): step 1/1. The polypeptide is Urease subunit alpha (Mycobacterium marinum (strain ATCC BAA-535 / M)).